The sequence spans 207 residues: Thiamine-phosphate synthase (207 aa).

4-amino-2-methyl-5-(diphosphooxymethyl)pyrimidine-binding positions include 35–39 (QYRDK) and asparagine 67. Mg(2+)-binding residues include aspartate 68 and aspartate 86. Threonine 105 is a binding site for 4-amino-2-methyl-5-(diphosphooxymethyl)pyrimidine. Residue 132–134 (SVT) participates in 2-[(2R,5Z)-2-carboxy-4-methylthiazol-5(2H)-ylidene]ethyl phosphate binding. Lysine 135 provides a ligand contact to 4-amino-2-methyl-5-(diphosphooxymethyl)pyrimidine. A 2-[(2R,5Z)-2-carboxy-4-methylthiazol-5(2H)-ylidene]ethyl phosphate-binding site is contributed by glycine 162.

Belongs to the thiamine-phosphate synthase family. Mg(2+) is required as a cofactor.

The enzyme catalyses 2-[(2R,5Z)-2-carboxy-4-methylthiazol-5(2H)-ylidene]ethyl phosphate + 4-amino-2-methyl-5-(diphosphooxymethyl)pyrimidine + 2 H(+) = thiamine phosphate + CO2 + diphosphate. The catalysed reaction is 2-(2-carboxy-4-methylthiazol-5-yl)ethyl phosphate + 4-amino-2-methyl-5-(diphosphooxymethyl)pyrimidine + 2 H(+) = thiamine phosphate + CO2 + diphosphate. It catalyses the reaction 4-methyl-5-(2-phosphooxyethyl)-thiazole + 4-amino-2-methyl-5-(diphosphooxymethyl)pyrimidine + H(+) = thiamine phosphate + diphosphate. Its pathway is cofactor biosynthesis; thiamine diphosphate biosynthesis; thiamine phosphate from 4-amino-2-methyl-5-diphosphomethylpyrimidine and 4-methyl-5-(2-phosphoethyl)-thiazole: step 1/1. Functionally, condenses 4-methyl-5-(beta-hydroxyethyl)thiazole monophosphate (THZ-P) and 2-methyl-4-amino-5-hydroxymethyl pyrimidine pyrophosphate (HMP-PP) to form thiamine monophosphate (TMP). This is Thiamine-phosphate synthase from Pseudomonas putida (strain W619).